A 349-amino-acid polypeptide reads, in one-letter code: UPF0324 inner membrane protein YeiH (349 aa).

Residues 1–12 lie on the Periplasmic side of the membrane; that stretch reads MTELTLQNHCRT. A helical membrane pass occupies residues 13 to 35; the sequence is MWHFIPGLALSAVITGVALWGGA. Residues 36 to 38 are Cytoplasmic-facing; sequence IPA. A helical membrane pass occupies residues 39–61; sequence VAGAGFSALTLAILLGMVIGNTI. At 62 to 99 the chain is on the periplasmic side; the sequence is YPQIWKQCDGGVLFAKQHLLRLGIILYGFRLTFSQIAD. Residues 100-122 traverse the membrane as a helical segment; it reads VGISGIVIDVLTLSSTFMLACFL. At 123–131 the chain is on the cytoplasmic side; it reads GQKVFGLDR. A helical transmembrane segment spans residues 132–151; the sequence is HTSWLIGAGSSICGAAAVLA. Residues 152 to 162 lie on the Periplasmic side of the membrane; that stretch reads TEPVVKAEASK. The helical transmembrane segment at 163-185 threads the bilayer; sequence VTVAVATVVIFGTIAIFLYPAMY. At 186–261 the chain is on the cytoplasmic side; sequence PLLAHWFSPE…SPATGAEKSK (76 aa). A helical membrane pass occupies residues 262-284; the sequence is ITIPWFAIFFIVVAIFNSFHLLP. At 285-290 the chain is on the periplasmic side; the sequence is KAVVDM. The chain crosses the membrane as a helical span at residues 291–313; sequence LVTLDTVLLAMAMAALGLTTHVS. At 314-322 the chain is on the cytoplasmic side; it reads ALKKAGAKP. Residues 323–345 form a helical membrane-spanning segment; it reads LLMALALFAWLIIGGGAINVLIH. Residues 346–349 are Periplasmic-facing; it reads SLIA.

The protein belongs to the UPF0324 family.

The protein resides in the cell inner membrane. In Salmonella typhimurium (strain LT2 / SGSC1412 / ATCC 700720), this protein is UPF0324 inner membrane protein YeiH (yeiH).